The primary structure comprises 355 residues: Methionine import ATP-binding protein MetN (355 aa).

Positions 8–250 (LKNIDITFTQ…PQEDLTQEFI (243 aa)) constitute an ABC transporter domain. Position 42 to 49 (42 to 49 (GYSGAGKS)) interacts with ATP.

This sequence belongs to the ABC transporter superfamily. Methionine importer (TC 3.A.1.24) family. In terms of assembly, the complex is composed of two ATP-binding proteins (MetN), two transmembrane proteins (MetI) and a solute-binding protein (MetQ).

It is found in the cell membrane. The enzyme catalyses L-methionine(out) + ATP + H2O = L-methionine(in) + ADP + phosphate + H(+). It catalyses the reaction D-methionine(out) + ATP + H2O = D-methionine(in) + ADP + phosphate + H(+). In terms of biological role, part of the ABC transporter complex MetNIQ involved in methionine import. Responsible for energy coupling to the transport system. This Streptococcus thermophilus (strain ATCC BAA-250 / LMG 18311) protein is Methionine import ATP-binding protein MetN.